Consider the following 120-residue polypeptide: Putative iron-sulfur cluster insertion protein ErpA (120 aa).

Residues Cys-49, Cys-113, and Cys-115 each coordinate iron-sulfur cluster.

Belongs to the HesB/IscA family. As to quaternary structure, homodimer. Requires iron-sulfur cluster as cofactor.

Required for insertion of 4Fe-4S clusters. This Albidiferax ferrireducens (strain ATCC BAA-621 / DSM 15236 / T118) (Rhodoferax ferrireducens) protein is Putative iron-sulfur cluster insertion protein ErpA.